A 304-amino-acid polypeptide reads, in one-letter code: UDP-3-O-acyl-N-acetylglucosamine deacetylase (304 aa).

3 residues coordinate Zn(2+): H79, H238, and D242. Catalysis depends on H265, which acts as the Proton donor.

Belongs to the LpxC family. Zn(2+) is required as a cofactor.

It carries out the reaction a UDP-3-O-[(3R)-3-hydroxyacyl]-N-acetyl-alpha-D-glucosamine + H2O = a UDP-3-O-[(3R)-3-hydroxyacyl]-alpha-D-glucosamine + acetate. It participates in glycolipid biosynthesis; lipid IV(A) biosynthesis; lipid IV(A) from (3R)-3-hydroxytetradecanoyl-[acyl-carrier-protein] and UDP-N-acetyl-alpha-D-glucosamine: step 2/6. In terms of biological role, catalyzes the hydrolysis of UDP-3-O-myristoyl-N-acetylglucosamine to form UDP-3-O-myristoylglucosamine and acetate, the committed step in lipid A biosynthesis. This chain is UDP-3-O-acyl-N-acetylglucosamine deacetylase, found in Chromobacterium violaceum (strain ATCC 12472 / DSM 30191 / JCM 1249 / CCUG 213 / NBRC 12614 / NCIMB 9131 / NCTC 9757 / MK).